The sequence spans 309 residues: Porphobilinogen deaminase (309 aa).

Residue Cys240 is modified to S-(dipyrrolylmethanemethyl)cysteine.

The protein belongs to the HMBS family. In terms of assembly, monomer. It depends on dipyrromethane as a cofactor.

It carries out the reaction 4 porphobilinogen + H2O = hydroxymethylbilane + 4 NH4(+). It functions in the pathway porphyrin-containing compound metabolism; protoporphyrin-IX biosynthesis; coproporphyrinogen-III from 5-aminolevulinate: step 2/4. Its function is as follows. Tetrapolymerization of the monopyrrole PBG into the hydroxymethylbilane pre-uroporphyrinogen in several discrete steps. The sequence is that of Porphobilinogen deaminase from Lawsonia intracellularis (strain PHE/MN1-00).